Reading from the N-terminus, the 30-residue chain is Cyclotide hyen-L (30 aa).

The cyclopeptide (Gly-Asn) cross-link spans 1–30; the sequence is GIPCAESCVYIPCTVTALLGCSCSDKVCYN. Intrachain disulfides connect C4-C21, C8-C23, and C13-C28.

This is a cyclic peptide. In terms of tissue distribution, detected in stems (at protein level).

Probably participates in a plant defense mechanism. Has cytotoxic activity against HUVEC cells (LC(50)= 2.26 uM) and various cancer cells including HeLa (LC(50)= 3.48 uM), MCF-7 and K562. Displays very weak hemolytic activity. Binds to and induces leakage in phospholipd membranes, particularly ones containing 1-palmitoyl-2-oleophosphatidylethanolamine (POPE). The polypeptide is Cyclotide hyen-L (Pigea enneasperma (Spade flower)).